The following is a 107-amino-acid chain: Putative double-stranded DNA mimic protein PC1_1990 (107 aa).

It belongs to the putative dsDNA mimic protein family.

May act as a double-stranded DNA (dsDNA) mimic. Probably regulates the activity of a dsDNA-binding protein. The sequence is that of Putative double-stranded DNA mimic protein PC1_1990 from Pectobacterium carotovorum subsp. carotovorum (strain PC1).